A 263-amino-acid polypeptide reads, in one-letter code: Large ribosomal subunit protein uL10m (263 aa).

The transit peptide at 1-29 directs the protein to the mitochondrion; sequence MPFSVEVEVFFLLVEDKLGWLPTLQPVRH. A disordered region spans residues 241–263; that stretch reads QHEGDCATSTEGKPHPPDPAPDS.

The protein belongs to the universal ribosomal protein uL10 family. In terms of assembly, component of the mitochondrial ribosome large subunit (39S) which comprises a 16S rRNA and about 50 distinct proteins.

It is found in the mitochondrion. This is Large ribosomal subunit protein uL10m (Mrpl10) from Rattus norvegicus (Rat).